A 260-amino-acid polypeptide reads, in one-letter code: Adenosylcobinamide-GDP ribazoletransferase (260 aa).

The next 8 membrane-spanning stretches (helical) occupy residues Ala3–Trp23, Phe36–Ile56, Trp60–Leu80, Val108–Leu128, Leu133–Met153, Ala180–Val200, Met206–Leu226, and Gly239–Ala259.

Belongs to the CobS family. Requires Mg(2+) as cofactor.

It localises to the cell inner membrane. The catalysed reaction is alpha-ribazole + adenosylcob(III)inamide-GDP = adenosylcob(III)alamin + GMP + H(+). The enzyme catalyses alpha-ribazole 5'-phosphate + adenosylcob(III)inamide-GDP = adenosylcob(III)alamin 5'-phosphate + GMP + H(+). It participates in cofactor biosynthesis; adenosylcobalamin biosynthesis; adenosylcobalamin from cob(II)yrinate a,c-diamide: step 7/7. Joins adenosylcobinamide-GDP and alpha-ribazole to generate adenosylcobalamin (Ado-cobalamin). Also synthesizes adenosylcobalamin 5'-phosphate from adenosylcobinamide-GDP and alpha-ribazole 5'-phosphate. This is Adenosylcobinamide-GDP ribazoletransferase from Prochlorococcus marinus (strain MIT 9303).